Reading from the N-terminus, the 113-residue chain is Large ribosomal subunit protein bL19m (113 aa).

This sequence belongs to the bacterial ribosomal protein bL19 family.

Its subcellular location is the mitochondrion. The protein is Large ribosomal subunit protein bL19m (RPL19) of Reclinomonas americana.